Reading from the N-terminus, the 730-residue chain is Elongation factor 2 (730 aa).

The tr-type G domain maps to 18-238 (DQIRNFGVIA…YSEGKVDELV (221 aa)). GTP-binding positions include 27-34 (AHVDHGKT), 93-97 (DTPGH), and 147-150 (NKVD). At His-595 the chain carries Diphthamide. The interval 711–730 (RKRKGLAPDPPTVSEFIDRE) is disordered.

The protein belongs to the TRAFAC class translation factor GTPase superfamily. Classic translation factor GTPase family. EF-G/EF-2 subfamily.

It is found in the cytoplasm. Catalyzes the GTP-dependent ribosomal translocation step during translation elongation. During this step, the ribosome changes from the pre-translocational (PRE) to the post-translocational (POST) state as the newly formed A-site-bound peptidyl-tRNA and P-site-bound deacylated tRNA move to the P and E sites, respectively. Catalyzes the coordinated movement of the two tRNA molecules, the mRNA and conformational changes in the ribosome. The sequence is that of Elongation factor 2 from Cenarchaeum symbiosum (strain A).